Consider the following 270-residue polypeptide: MNRYENIFDRLSQRKEGCFVPFVVLGDPSLDTSLKIINILIQNGADALELGIPFSDPLADGKTIQKANLRALSQKNNIFQYFKEIKNLRKKHTQIPIGLLIYANLVYNQGLDNFYLKCRKSGVDSVLIADVPIEESEIFYTTANKYKISSIFICPPNADDDLLYRISLYAKGYIYVLSRPGVTGIENQNFFVSGDFIKKIKKYNSVPLLQGFGISNSIQVKQAISSGLSGVICGSAIINIIEKYLYEEDIMMTKIQEFVKHLKKSTKLIA.

Residues E49 and D60 each act as proton acceptor in the active site.

Belongs to the TrpA family. In terms of assembly, tetramer of two alpha and two beta chains.

The enzyme catalyses (1S,2R)-1-C-(indol-3-yl)glycerol 3-phosphate + L-serine = D-glyceraldehyde 3-phosphate + L-tryptophan + H2O. Its pathway is amino-acid biosynthesis; L-tryptophan biosynthesis; L-tryptophan from chorismate: step 5/5. The alpha subunit is responsible for the aldol cleavage of indoleglycerol phosphate to indole and glyceraldehyde 3-phosphate. This chain is Tryptophan synthase alpha chain, found in Buchnera aphidicola subsp. Diuraphis noxia.